A 142-amino-acid chain; its full sequence is uncharacterized protein (142 aa).

A disordered region spans residues 70–94; that stretch reads PKSVSNSKKKKEKAEKGLLRPTTKP. Basic and acidic residues predominate over residues 81–94; the sequence is EKAEKGLLRPTTKP.

This is an uncharacterized protein from Bacillus subtilis (strain 168).